Consider the following 142-residue polypeptide: Midkine-B (142 aa).

Positions 1–20 (MELRAFCVILLITILAVSSQ) are cleaved as a signal peptide. Intrachain disulfides connect Cys36–Cys60, Cys44–Cys69, Cys51–Cys73, Cys83–Cys115, and Cys93–Cys125.

Belongs to the pleiotrophin family. As to expression, in adults, expression is highest in the brain, eye and bone, with lower expression in the heart and lung. Not expressed in the ovary. In the tailbud stage embryo, expressed in the head and tail regions as well as in the central nervous system (CNS).

Its subcellular location is the secreted. Secreted protein that functions as a cytokine and growth factor and mediates its signal through cell-surface proteoglycan and non-proteoglycan receptors. Binds cell-surface proteoglycan receptors via their chondroitin sulfate (CS) groups. Thereby regulates many processes like inflammatory response, cell proliferation, cell adhesion, cell growth, cell survival, tissue regeneration, cell differentiation and cell migration. Inhibits mesoderm formation and promotes neural formation during development. Plays a role in development of the neuromuscular junction (NMJ). Has antibacterial activity against both Gram-positive and Gram-negative bacteria. The chain is Midkine-B (mdk-b) from Xenopus laevis (African clawed frog).